The primary structure comprises 150 residues: Large ribosomal subunit protein bL9 (150 aa).

The protein belongs to the bacterial ribosomal protein bL9 family.

Its function is as follows. Binds to the 23S rRNA. The protein is Large ribosomal subunit protein bL9 of Streptococcus pyogenes serotype M2 (strain MGAS10270).